The chain runs to 269 residues: 4-hydroxy-tetrahydrodipicolinate reductase (269 aa).

NAD(+) contacts are provided by residues Gly-9 to Met-14 and Glu-35. Arg-36 contributes to the NADP(+) binding site. Residues Gly-98–Thr-100 and Ala-122–Tyr-125 each bind NAD(+). Catalysis depends on His-155, which acts as the Proton donor/acceptor. His-156 contacts (S)-2,3,4,5-tetrahydrodipicolinate. Lys-159 (proton donor) is an active-site residue. Gly-165 to Thr-166 is a binding site for (S)-2,3,4,5-tetrahydrodipicolinate.

Belongs to the DapB family.

It is found in the cytoplasm. It carries out the reaction (S)-2,3,4,5-tetrahydrodipicolinate + NAD(+) + H2O = (2S,4S)-4-hydroxy-2,3,4,5-tetrahydrodipicolinate + NADH + H(+). The catalysed reaction is (S)-2,3,4,5-tetrahydrodipicolinate + NADP(+) + H2O = (2S,4S)-4-hydroxy-2,3,4,5-tetrahydrodipicolinate + NADPH + H(+). It functions in the pathway amino-acid biosynthesis; L-lysine biosynthesis via DAP pathway; (S)-tetrahydrodipicolinate from L-aspartate: step 4/4. Catalyzes the conversion of 4-hydroxy-tetrahydrodipicolinate (HTPA) to tetrahydrodipicolinate. This is 4-hydroxy-tetrahydrodipicolinate reductase from Actinobacillus pleuropneumoniae serotype 3 (strain JL03).